A 405-amino-acid chain; its full sequence is MGSIAESSPLMSRENVEGIRKAQRAEGTATVMAIGTAHPPHIFPQDTYADFYFRATNSEHKVELKKKFDRICKKTMIGKRYFNYDEEFLKKYPNITSFDEPSLNDRQDICVPGVPALGKEAALKAIEEWGQPLSKITHLVFCTSCGVDMPSADFQLAKLLGLNTNVNKYCVYMQGCYAGGTVLRYAKDLAENNRGSRVLVVCAELTIIGLRGPNESHLDNAIGNSLFGDGAAALIVGADPIVGIEKPIFEIVCAKQTVIPDSEDVIHLHLREAGLMFYMSKDSPETISNNVEGCLVDIFKSVGMTPPADWNSLFWIPHPGGRAILDEVEARLKLRPEKFRATRHVLWEYGNMVSACVLYILDEMRNKSAADGLGTYGEGLEWGVLLGFGPGMTVETILLHSLPPV.

Polar residues predominate over residues 1-10 (MGSIAESSPL). Residues 1 to 22 (MGSIAESSPLMSRENVEGIRKA) are disordered. The active site involves C176. CoA contacts are provided by residues S283 and 320-323 (GGRA).

This sequence belongs to the thiolase-like superfamily. Chalcone/stilbene synthases family. Homodimer.

Its pathway is secondary metabolite biosynthesis; flavonoid biosynthesis. Functionally, catalyzes the iterative condensations of 8 molecules of malonyl-CoA to produce aromatic octaketides, SEK4 and SEK4b, the products of the minimal polyketide synthase for the benzoisochromanequinone actinorhodin. May be involved in the biosynthesis of the octaketide barbaloin. This is Octaketide synthase 3 (PKS5) from Aloe arborescens (Kidachi aloe).